The primary structure comprises 134 residues: ATP synthase epsilon chain (134 aa).

It belongs to the ATPase epsilon chain family. In terms of assembly, F-type ATPases have 2 components, CF(1) - the catalytic core - and CF(0) - the membrane proton channel. CF(1) has five subunits: alpha(3), beta(3), gamma(1), delta(1), epsilon(1). CF(0) has three main subunits: a, b and c.

The protein resides in the cell membrane. In terms of biological role, produces ATP from ADP in the presence of a proton gradient across the membrane. In Clostridium botulinum (strain Eklund 17B / Type B), this protein is ATP synthase epsilon chain.